Consider the following 227-residue polypeptide: Transcription antitermination protein NusB (227 aa).

Disordered regions lie at residues 165 to 189 (ASESLDDAPVAPWDDSDALDDSDED) and 201 to 227 (AEETVEVSEVAEDSEVSKVSEEKADES). Composition is skewed to acidic residues over residues 178–189 (DDSDALDDSDED) and 201–214 (AEETVEVSEVAEDS). The segment covering 215-227 (EVSKVSEEKADES) has biased composition (basic and acidic residues).

Belongs to the NusB family.

Functionally, involved in transcription antitermination. Required for transcription of ribosomal RNA (rRNA) genes. Binds specifically to the boxA antiterminator sequence of the ribosomal RNA (rrn) operons. This chain is Transcription antitermination protein NusB, found in Corynebacterium glutamicum (strain ATCC 13032 / DSM 20300 / JCM 1318 / BCRC 11384 / CCUG 27702 / LMG 3730 / NBRC 12168 / NCIMB 10025 / NRRL B-2784 / 534).